Reading from the N-terminus, the 256-residue chain is Ubiquinone/menaquinone biosynthesis C-methyltransferase UbiE (256 aa).

The segment covering M1–P12 has biased composition (basic and acidic residues). The disordered stretch occupies residues M1–V21. S-adenosyl-L-methionine contacts are provided by residues T79, D100, and D128–A129.

Belongs to the class I-like SAM-binding methyltransferase superfamily. MenG/UbiE family.

The enzyme catalyses a 2-demethylmenaquinol + S-adenosyl-L-methionine = a menaquinol + S-adenosyl-L-homocysteine + H(+). It catalyses the reaction a 2-methoxy-6-(all-trans-polyprenyl)benzene-1,4-diol + S-adenosyl-L-methionine = a 5-methoxy-2-methyl-3-(all-trans-polyprenyl)benzene-1,4-diol + S-adenosyl-L-homocysteine + H(+). It functions in the pathway quinol/quinone metabolism; menaquinone biosynthesis; menaquinol from 1,4-dihydroxy-2-naphthoate: step 2/2. It participates in cofactor biosynthesis; ubiquinone biosynthesis. Methyltransferase required for the conversion of demethylmenaquinol (DMKH2) to menaquinol (MKH2) and the conversion of 2-polyprenyl-6-methoxy-1,4-benzoquinol (DDMQH2) to 2-polyprenyl-3-methyl-6-methoxy-1,4-benzoquinol (DMQH2). This Pseudomonas putida (strain W619) protein is Ubiquinone/menaquinone biosynthesis C-methyltransferase UbiE.